A 429-amino-acid chain; its full sequence is Keratin, type I cytoskeletal 20 (429 aa).

The interval 1–26 (MDFSRRSFHRSLSSSSQGPALSTSGS) is disordered. The interval 1–74 (MDFSRRSFHR…SNGGDLFGGN (74 aa)) is head. The segment covering 10-26 (RSLSSSSQGPALSTSGS) has biased composition (low complexity). Phosphoserine occurs at positions 13, 16, and 26. Positions 75-110 (EKLAMQNLNDRLASYLEKVRSLEQSNSKLEAQIKQW) are coil 1A. The IF rod domain occupies 75 to 386 (EKLAMQNLND…RLLEGEDIKT (312 aa)). A linker 1 region spans residues 111–128 (YETNAPSTIRDYSSYYAQ). Positions 129-220 (IKELQDQIKD…KEHQEEVEVL (92 aa)) are coil 1B. Residues 221 to 243 (RRQLGNNVNVEVDAAPGLNLGEI) are linker 12. A coil 2 region spans residues 244 to 382 (MNEMRQKYEI…ATYRRLLEGE (139 aa)). A tail region spans residues 383–429 (DIKTTEYQLNTLEAKDIKKTRKIKTVVEEVVDGKVVSSEVKEIEENI).

The protein belongs to the intermediate filament family. In terms of assembly, heterotetramer of two type I and two type II keratins. Associates with KRT8. In terms of processing, hyperphosphorylation at Ser-13 occurs during the early stages of apoptosis but becomes less prominent during the later stages. Phosphorylation at Ser-13 also increases in response to stress brought on by cell injury. Post-translationally, proteolytically cleaved by caspases during apoptosis. Cleavage occurs at Asp-233. Expressed predominantly in the intestinal epithelium in differentiated villus cells.

Plays a significant role in maintaining keratin filament organization in intestinal epithelia. When phosphorylated, plays a role in the secretion of mucin in the small intestine. In Rattus norvegicus (Rat), this protein is Keratin, type I cytoskeletal 20 (Krt20).